Reading from the N-terminus, the 84-residue chain is MRKDIHPAYQQVLFHDTNADVYFLIGSTIQTKQTKEYQGQVYPYVTLDISSASHPFYTGEVRQASNEGRVASFNKRFARFNRKS.

It belongs to the bacterial ribosomal protein bL31 family. Type B subfamily. As to quaternary structure, part of the 50S ribosomal subunit.

In Acinetobacter baumannii (strain AB307-0294), this protein is Large ribosomal subunit protein bL31B.